The chain runs to 942 residues: Isoleucine--tRNA ligase (942 aa).

Positions 58–68 (PYVNGSIHLGH) match the 'HIGH' region motif. An L-isoleucyl-5'-AMP-binding site is contributed by Glu564. The 'KMSKS' region motif lies at 605–609 (KMSKS). Lys608 is a binding site for ATP. Zn(2+) is bound by residues Cys905, Cys908, Cys925, and Cys928.

The protein belongs to the class-I aminoacyl-tRNA synthetase family. IleS type 1 subfamily. As to quaternary structure, monomer. Zn(2+) serves as cofactor.

It localises to the cytoplasm. It carries out the reaction tRNA(Ile) + L-isoleucine + ATP = L-isoleucyl-tRNA(Ile) + AMP + diphosphate. In terms of biological role, catalyzes the attachment of isoleucine to tRNA(Ile). As IleRS can inadvertently accommodate and process structurally similar amino acids such as valine, to avoid such errors it has two additional distinct tRNA(Ile)-dependent editing activities. One activity is designated as 'pretransfer' editing and involves the hydrolysis of activated Val-AMP. The other activity is designated 'posttransfer' editing and involves deacylation of mischarged Val-tRNA(Ile). The protein is Isoleucine--tRNA ligase of Blochmanniella pennsylvanica (strain BPEN).